A 340-amino-acid chain; its full sequence is Deubiquitinase SseL (340 aa).

Residue His223 is part of the active site. Residue Cys285 is the Nucleophile of the active site.

Belongs to the peptidase C79 family.

The protein resides in the secreted. Its subcellular location is the host cytoplasm. Its function is as follows. Effector proteins function to alter host cell physiology and promote bacterial survival in host tissues. This protease targets the host cell ubiquitin pathway by acting as a deubiquitinase in infected host cells. This chain is Deubiquitinase SseL (sseL), found in Salmonella paratyphi B (strain ATCC BAA-1250 / SPB7).